The sequence spans 502 residues: N-fatty-acyl-amino acid synthase/hydrolase PM20D1 (502 aa).

A signal peptide spans 1–25 (MAQRCVCVLALVAMLLLVFPTVSRS). His-125 contacts Zn(2+). Residue Asp-127 is part of the active site. Residue Asp-157 participates in Zn(2+) binding. The Proton acceptor role is filled by Glu-191. Zn(2+) contacts are provided by Glu-192 and Asp-217. N-linked (GlcNAc...) asparagine glycosylation occurs at Asn-252. Residue His-464 participates in Zn(2+) binding.

Belongs to the peptidase M20A family. Requires Zn(2+) as cofactor.

Its subcellular location is the secreted. It carries out the reaction an N-acyl-L-amino acid + H2O = an L-alpha-amino acid + a carboxylate. The enzyme catalyses an N-acyl-aromatic L-alpha-amino acid + H2O = an aromatic L-alpha-amino acid + a carboxylate. The catalysed reaction is L-phenylalanine + (9Z)-octadecenoate = N-(9Z-octadecenoyl)-L-phenylalanine + H2O. It catalyses the reaction N-(9Z-octadecenoyl)-L-leucine + H2O = L-leucine + (9Z)-octadecenoate. It carries out the reaction N-(5Z,8Z,11Z,14Z)-eicosatetraenoyl-glycine + H2O = (5Z,8Z,11Z,14Z)-eicosatetraenoate + glycine. The enzyme catalyses N-hexadecanoyl-L-phenylalanine + H2O = hexadecanoate + L-phenylalanine. The catalysed reaction is N-octadecanoyl-L-phenylalanine + H2O = octadecanoate + L-phenylalanine. It catalyses the reaction N-(4Z,7Z,10Z,13Z,16Z,19Z-docosahexaenoyl)-L-phenylalanine + H2O = (4Z,7Z,10Z,13Z,16Z,19Z)-docosahexaenoate + L-phenylalanine. It carries out the reaction N-(9Z-octadecenoyl)-L-asparagine + H2O = L-asparagine + (9Z)-octadecenoate. The enzyme catalyses (9Z)-octadecenoate + glycine = N-(9Z-octadecenoyl)glycine + H2O. The catalysed reaction is N-(9Z-octadecenoyl)-L-lysine + H2O = L-lysine + (9Z)-octadecenoate. It catalyses the reaction N-(9Z-octadecenoyl)-L-methionine + H2O = (9Z)-octadecenoate + L-methionine. It carries out the reaction N-(9Z-octadecenoyl)-L-serine + H2O = L-serine + (9Z)-octadecenoate. The enzyme catalyses N-(9Z-octadecenoyl)-L-tryptophan + H2O = L-tryptophan + (9Z)-octadecenoate. The catalysed reaction is N-(9Z-octadecenoyl)-L-tyrosine + H2O = L-tyrosine + (9Z)-octadecenoate. It catalyses the reaction N-(9Z-octadecenoyl)-L-glutamine + H2O = L-glutamine + (9Z)-octadecenoate. It carries out the reaction N-(5Z,8Z,11Z,14Z-eicosatetraenoyl)-L-serine + H2O = (5Z,8Z,11Z,14Z)-eicosatetraenoate + L-serine. The enzyme catalyses (5Z,8Z,11Z,14Z)-eicosatetraenoate + L-phenylalanine = N-(5Z,8Z,11Z,14Z-eicosatetraenoyl)-L-phenylalanine + H2O. It functions in the pathway amino-acid metabolism. It participates in energy metabolism. The protein operates within lipid metabolism; fatty acid metabolism. Lipoproteins are powerful coactivators of PM20D1 activity in vitro and NAA biosynthesis in vivo. Its function is as follows. Secreted enzyme that regulates the endogenous N-fatty acyl amino acid (NAAs) tissue and circulating levels by functioning as a bidirectional NAA synthase/hydrolase. It condenses free fatty acids and free amino acids to generate NAAs and bidirectionally catalyzes the reverse hydrolysis reaction. Some of these NAAs stimulate oxidative metabolism via mitochondrial uncoupling, increasing energy expenditure in a UPC1-independent manner. Thereby, this secreted protein may indirectly regulate whole body energy expenditure. PM20D1 circulates in tight association with both low- and high-density (LDL and HDL,respectively) lipoprotein particles. The chain is N-fatty-acyl-amino acid synthase/hydrolase PM20D1 from Homo sapiens (Human).